A 343-amino-acid polypeptide reads, in one-letter code: Holliday junction branch migration complex subunit RuvB (343 aa).

The interval 4-184 (SDRLISAKAG…FGIVQRLEFY (181 aa)) is large ATPase domain (RuvB-L). ATP contacts are provided by residues Ile-23, Arg-24, Gly-65, Lys-68, Thr-69, Thr-70, 131–133 (EDY), Arg-174, Tyr-184, and Arg-221. Mg(2+) is bound at residue Thr-69. The tract at residues 185 to 255 (NHQDLTHIIT…IADQALNMLK (71 aa)) is small ATPAse domain (RuvB-S). The tract at residues 258–343 (SQGFDHMDRR…RSGREDDLFE (86 aa)) is head domain (RuvB-H). Arg-294, Arg-313, and Arg-318 together coordinate DNA.

The protein belongs to the RuvB family. In terms of assembly, homohexamer. Forms an RuvA(8)-RuvB(12)-Holliday junction (HJ) complex. HJ DNA is sandwiched between 2 RuvA tetramers; dsDNA enters through RuvA and exits via RuvB. An RuvB hexamer assembles on each DNA strand where it exits the tetramer. Each RuvB hexamer is contacted by two RuvA subunits (via domain III) on 2 adjacent RuvB subunits; this complex drives branch migration. In the full resolvosome a probable DNA-RuvA(4)-RuvB(12)-RuvC(2) complex forms which resolves the HJ.

It localises to the cytoplasm. It catalyses the reaction ATP + H2O = ADP + phosphate + H(+). Functionally, the RuvA-RuvB-RuvC complex processes Holliday junction (HJ) DNA during genetic recombination and DNA repair, while the RuvA-RuvB complex plays an important role in the rescue of blocked DNA replication forks via replication fork reversal (RFR). RuvA specifically binds to HJ cruciform DNA, conferring on it an open structure. The RuvB hexamer acts as an ATP-dependent pump, pulling dsDNA into and through the RuvAB complex. RuvB forms 2 homohexamers on either side of HJ DNA bound by 1 or 2 RuvA tetramers; 4 subunits per hexamer contact DNA at a time. Coordinated motions by a converter formed by DNA-disengaged RuvB subunits stimulates ATP hydrolysis and nucleotide exchange. Immobilization of the converter enables RuvB to convert the ATP-contained energy into a lever motion, pulling 2 nucleotides of DNA out of the RuvA tetramer per ATP hydrolyzed, thus driving DNA branch migration. The RuvB motors rotate together with the DNA substrate, which together with the progressing nucleotide cycle form the mechanistic basis for DNA recombination by continuous HJ branch migration. Branch migration allows RuvC to scan DNA until it finds its consensus sequence, where it cleaves and resolves cruciform DNA. This is Holliday junction branch migration complex subunit RuvB from Marinobacter nauticus (strain ATCC 700491 / DSM 11845 / VT8) (Marinobacter aquaeolei).